The chain runs to 138 residues: MRALWIVAVLLVAVEGHLLQFNKMIKFETRKNAIPFYAFYGCYCGWGGRGRPKDATDRCCFVHDCCYGKLANCNTKWDIYPYSLKSGYITCGKGSWCEEQICECDRVAAECLRRSLSTYKYGYMFYPDSRCKGPSEQC.

The signal sequence occupies residues 1–16 (MRALWIVAVLLVAVEG). 7 disulfide bridges follow: Cys-42–Cys-131, Cys-44–Cys-60, Cys-59–Cys-111, Cys-65–Cys-138, Cys-66–Cys-104, Cys-73–Cys-97, and Cys-91–Cys-102. Ca(2+) is bound by residues Tyr-43, Gly-45, and Gly-47. His-63 is a catalytic residue. Residue Asp-64 coordinates Ca(2+). The active site involves Asp-105.

It belongs to the phospholipase A2 family. Group II subfamily. In terms of assembly, heterodimer of an acidic subunit and a basic chain. The acidic subunit is non-toxic, without enzymatic activity and comprises 3 peptides that are cross-linked by 7 disulfide bridges. The basic subunit is toxic, has phospholipase A2 activity and is composed of a single chain. Requires Ca(2+) as cofactor. As to expression, expressed by the venom gland.

It localises to the secreted. It catalyses the reaction a 1,2-diacyl-sn-glycero-3-phosphocholine + H2O = a 1-acyl-sn-glycero-3-phosphocholine + a fatty acid + H(+). Snake venom phospholipase A2 (PLA2) that shows presynaptic neurotoxicity. PLA2 catalyzes the calcium-dependent hydrolysis of the 2-acyl groups in 3-sn-phosphoglycerides. The protein is Basic phospholipase A2 canebraxin B of Crotalus horridus (Timber rattlesnake).